A 1120-amino-acid polypeptide reads, in one-letter code: Phosphatidylinositide phosphatase SAC2 (1120 aa).

Residues 167–518 (YKIFMDSDSF…GDTISRQYAG (352 aa)) form the SAC domain. The hSac2 domain occupies 593-760 (RGAQEQVSLL…RHSKPHEDIM (168 aa)). 2 disordered regions span residues 837 to 881 (SSLE…SREN) and 979 to 1008 (PAPK…LPRP). Over residues 851-860 (LKDHGPHSEE) the composition is skewed to basic and acidic residues. Polar residues-rich tracts occupy residues 864 to 879 (DSDS…SGSR) and 998 to 1007 (SSHSQNQLPR).

The protein localises to the membrane. The protein resides in the clathrin-coated pit. It is found in the early endosome. It localises to the recycling endosome. The enzyme catalyses a myo-inositol phosphate + H2O = myo-inositol + phosphate. Inositol 4-phosphatase which mainly acts on phosphatidylinositol 4-phosphate. May be functionally linked to OCRL, which converts phosphatidylinositol 4,5-bisphosphate to phosphatidylinositol, for a sequential dephosphorylation of phosphatidylinositol 4,5-bisphosphate at the 5 and 4 position of inositol, thus playing an important role in the endocytic recycling. This chain is Phosphatidylinositide phosphatase SAC2, found in Danio rerio (Zebrafish).